Consider the following 585-residue polypeptide: Probable monoterpene synthase MTS1, chloroplastic (585 aa).

Positions 1–29 (MSLSGVPLSAGLAPSPSNKPTNGKGQNIV) are disordered. The transit peptide at 1–31 (MSLSGVPLSAGLAPSPSNKPTNGKGQNIVRR) directs the protein to the chloroplast. Polar residues predominate over residues 15 to 25 (SPSNKPTNGKG). Residues Arg298, Asp335, Asp339, Arg476, and Asp479 each coordinate (2E)-geranyl diphosphate. Mg(2+) contacts are provided by Asp335 and Asp339. The DDXXD motif signature appears at 335-339 (DDIYD). Residues Asp479, Thr483, and Glu487 each coordinate Mg(2+).

This sequence belongs to the terpene synthase family. Tpsb subfamily. Mg(2+) is required as a cofactor. Mn(2+) serves as cofactor. As to expression, expressed in trichomes. Detected in flowers, but not in leaves.

The protein resides in the plastid. The protein localises to the chloroplast. The polypeptide is Probable monoterpene synthase MTS1, chloroplastic (Humulus lupulus (European hop)).